The sequence spans 189 residues: Marginal zone B- and B1-cell-specific protein (189 aa).

The first 22 residues, 1–22 (MRLSLPLLLLLLGAWAIPGGLG), serve as a signal peptide directing secretion. Cystine bridges form between Cys50–Cys178, Cys53–Cys171, and Cys95–Cys143. The Prevents secretion from ER signature appears at 186–189 (REEL).

It belongs to the MZB1 family. In terms of assembly, part of the ER chaperone complex, a multi-protein complex in the endoplasmic reticulum containing a large number of molecular chaperones which associates with unassembled incompletely folded immunoglobulin heavy chains. Isoform 2 interacts with CASP2 and CASP9. Interacts with HSP90B1 and PDIA3 in a calcium-dependent manner. In terms of processing, forms an interchain disulfide bond with IgM monomers. In terms of tissue distribution, widely expressed with highest levels in adult brain, small intestine and lymphoid tissues such as thymus and spleen. Expression is frequently lower in intestinal-type gastric cancer. In obese patients, more abundant in omental than in subcutaneous fat.

Its subcellular location is the endoplasmic reticulum lumen. It localises to the secreted. It is found in the cytoplasm. Associates with immunoglobulin M (IgM) heavy and light chains and promotes IgM assembly and secretion. May exert its effect by acting as a molecular chaperone or as an oxidoreductase as it displays a low level of oxidoreductase activity. Isoform 2 may be involved in regulation of apoptosis. Helps to diversify peripheral B-cell functions by regulating Ca(2+) stores, antibody secretion and integrin activation. Functionally, acts as a hormone-regulated adipokine/pro-inflammatory cytokine that is implicated in causing chronic inflammation, affecting cellular expansion and blunting insulin response in adipocytes. May have a role in the onset of insulin resistance. In Homo sapiens (Human), this protein is Marginal zone B- and B1-cell-specific protein (MZB1).